The primary structure comprises 165 residues: Large ribosomal subunit protein uL30 (165 aa).

This sequence belongs to the universal ribosomal protein uL30 family. As to quaternary structure, part of the 50S ribosomal subunit.

This chain is Large ribosomal subunit protein uL30, found in Thermoplasma acidophilum (strain ATCC 25905 / DSM 1728 / JCM 9062 / NBRC 15155 / AMRC-C165).